Here is a 343-residue protein sequence, read N- to C-terminus: Shematrin-like protein 3 (343 aa).

The first 16 residues, 1 to 16 (MLKLVCAVVLIATVNA), serve as a signal peptide directing secretion.

Prismatic layer of shell (at protein level).

Its subcellular location is the secreted. The polypeptide is Shematrin-like protein 3 (Pinctada maxima (Silver-lipped pearl oyster)).